We begin with the raw amino-acid sequence, 705 residues long: Polyribonucleotide nucleotidyltransferase (705 aa).

2 residues coordinate Mg(2+): Asp-494 and Asp-500. In terms of domain architecture, KH spans 561–620; it reads PRITTVKVKPEKVRAVIGTGGKNIRQIVSETGVTIDVEDDGTVTIASSDMEASARAIAMV. Residues 630-698 enclose the S1 motif domain; the sequence is GKIYRGTVKK…KQGKIRLSRK (69 aa).

The protein belongs to the polyribonucleotide nucleotidyltransferase family. It depends on Mg(2+) as a cofactor.

The protein localises to the cytoplasm. It catalyses the reaction RNA(n+1) + phosphate = RNA(n) + a ribonucleoside 5'-diphosphate. In terms of biological role, involved in mRNA degradation. Catalyzes the phosphorolysis of single-stranded polyribonucleotides processively in the 3'- to 5'-direction. This is Polyribonucleotide nucleotidyltransferase from Syntrophus aciditrophicus (strain SB).